The following is a 352-amino-acid chain: Dihydroorotate dehydrogenase (quinone) (352 aa).

FMN contacts are provided by residues 68–72 and threonine 92; that span reads AGFDK. Lysine 72 is a substrate binding site. A substrate-binding site is contributed by 117–121; that stretch reads NAMGF. FMN contacts are provided by asparagine 146 and asparagine 179. Position 179 (asparagine 179) interacts with substrate. Catalysis depends on serine 182, which acts as the Nucleophile. Asparagine 184 contacts substrate. Residues lysine 215 and threonine 243 each contribute to the FMN site. Residue 244-245 coordinates substrate; that stretch reads NT. FMN is bound by residues glycine 263, glycine 292, and 313–314; that span reads YS.

This sequence belongs to the dihydroorotate dehydrogenase family. Type 2 subfamily. In terms of assembly, monomer. It depends on FMN as a cofactor.

Its subcellular location is the cell membrane. It carries out the reaction (S)-dihydroorotate + a quinone = orotate + a quinol. Its pathway is pyrimidine metabolism; UMP biosynthesis via de novo pathway; orotate from (S)-dihydroorotate (quinone route): step 1/1. Its function is as follows. Catalyzes the conversion of dihydroorotate to orotate with quinone as electron acceptor. The chain is Dihydroorotate dehydrogenase (quinone) from Sulfurimonas denitrificans (strain ATCC 33889 / DSM 1251) (Thiomicrospira denitrificans (strain ATCC 33889 / DSM 1251)).